The primary structure comprises 208 residues: Ribosomal RNA small subunit methyltransferase G (208 aa).

S-adenosyl-L-methionine-binding positions include glycine 76, leucine 81, 127 to 128, and arginine 142; that span reads VE.

It belongs to the methyltransferase superfamily. RNA methyltransferase RsmG family.

The protein resides in the cytoplasm. The catalysed reaction is guanosine(527) in 16S rRNA + S-adenosyl-L-methionine = N(7)-methylguanosine(527) in 16S rRNA + S-adenosyl-L-homocysteine. Functionally, specifically methylates the N7 position of guanine in position 527 of 16S rRNA. This is Ribosomal RNA small subunit methyltransferase G from Legionella pneumophila subsp. pneumophila (strain Philadelphia 1 / ATCC 33152 / DSM 7513).